The following is an 888-amino-acid chain: Leucine--tRNA ligase (888 aa).

Residues 43-53 (PYPSGRIHMGH) carry the 'HIGH' region motif. The 'KMSKS' region signature appears at 644 to 648 (KMSKS). Position 647 (Lys647) interacts with ATP.

This sequence belongs to the class-I aminoacyl-tRNA synthetase family.

The protein localises to the cytoplasm. It catalyses the reaction tRNA(Leu) + L-leucine + ATP = L-leucyl-tRNA(Leu) + AMP + diphosphate. The protein is Leucine--tRNA ligase of Rhodopseudomonas palustris (strain BisA53).